Reading from the N-terminus, the 589-residue chain is Aspartate--tRNA ligase (589 aa).

Glu-174 serves as a coordination point for L-aspartate. An aspartate region spans residues 198–201 (QLFK). An L-aspartate-binding site is contributed by Arg-220. Residues 220 to 222 (RDE) and Gln-229 each bind ATP. An L-aspartate-binding site is contributed by His-448. Glu-484 is an ATP binding site. Arg-491 serves as a coordination point for L-aspartate. 536-539 (GLDR) provides a ligand contact to ATP.

This sequence belongs to the class-II aminoacyl-tRNA synthetase family. Type 1 subfamily. Homodimer.

The protein resides in the cytoplasm. It carries out the reaction tRNA(Asp) + L-aspartate + ATP = L-aspartyl-tRNA(Asp) + AMP + diphosphate. Its function is as follows. Catalyzes the attachment of L-aspartate to tRNA(Asp) in a two-step reaction: L-aspartate is first activated by ATP to form Asp-AMP and then transferred to the acceptor end of tRNA(Asp). In Leuconostoc citreum (strain KM20), this protein is Aspartate--tRNA ligase.